Reading from the N-terminus, the 265-residue chain is 3-methyl-2-oxobutanoate hydroxymethyltransferase (265 aa).

Residues Asp43 and Asp82 each coordinate Mg(2+). 3-methyl-2-oxobutanoate is bound by residues Asp43 to Ser44, Asp82, and Lys111. Glu113 lines the Mg(2+) pocket. Glu180 acts as the Proton acceptor in catalysis.

The protein belongs to the PanB family. In terms of assembly, homodecamer; pentamer of dimers. The cofactor is Mg(2+).

It is found in the cytoplasm. It carries out the reaction 3-methyl-2-oxobutanoate + (6R)-5,10-methylene-5,6,7,8-tetrahydrofolate + H2O = 2-dehydropantoate + (6S)-5,6,7,8-tetrahydrofolate. It functions in the pathway cofactor biosynthesis; (R)-pantothenate biosynthesis; (R)-pantoate from 3-methyl-2-oxobutanoate: step 1/2. Its function is as follows. Catalyzes the reversible reaction in which hydroxymethyl group from 5,10-methylenetetrahydrofolate is transferred onto alpha-ketoisovalerate to form ketopantoate. This chain is 3-methyl-2-oxobutanoate hydroxymethyltransferase, found in Francisella tularensis subsp. mediasiatica (strain FSC147).